A 156-amino-acid chain; its full sequence is Small ribosomal subunit protein uS7 (156 aa).

It belongs to the universal ribosomal protein uS7 family. In terms of assembly, part of the 30S ribosomal subunit. Contacts proteins S9 and S11.

One of the primary rRNA binding proteins, it binds directly to 16S rRNA where it nucleates assembly of the head domain of the 30S subunit. Is located at the subunit interface close to the decoding center, probably blocks exit of the E-site tRNA. The sequence is that of Small ribosomal subunit protein uS7 from Dichelobacter nodosus (strain VCS1703A).